The primary structure comprises 759 residues: MDDQLKQSALDFHEFPVPGKIQVSPTKPLATQRDLALAYSPGVAAPCLEIEKDPLKAYKYTARGNLVAVISNGTAVLGLGNIGALAGKPVMEGKGVLFKKFAGIDVFDIEVDELDPDKFIEVVAALEPTFGGINLEDIKAPECFYIEQKLRERMNIPVFHDDQHGTAIISTAAILNGLRVVEKNISDVRMVVSGAGAAAIACMNLLVALGLQKHNIVVCDSKGVIYQGREPNMAETKAAYAVVDDGKRTLDDVIEGADIFLGCSGPKVLTQEMVKKMARAPMILALANPEPEILPPLAKEVRPDAIICTGRSDYPNQVNNVLCFPFIFRGALDVGATAINEEMKLAAVRAIAELAHAEQSEVVASAYGDQDLSFGPEYIIPKPFDPRLIVKIAPAVAKAAMESGVATRPIADFDVYIDKLTEFVYKTNLFMKPIFSQARKAPKRVVLPEGEEARVLHATQELVTLGLAKPILIGRPNVIEMRIQKLGLQIKAGVDFEIVNNESDPRFKEYWTEYFQIMKRRGVTQEQAQRALISNPTVIGAIMVQRGEADAMICGTVGDYHEHFSVVKNVFGYRDGVHTAGAMNALLLPSGNTFIADTYVNDEPDAEELAEITLMAAETVRRFGIEPRVALLSHSNFGSSDCPSSSKMRQALELVRERAPELMIDGEMHGDAALVEAIRNDRMPDSSLKGSANILVMPNMEAARISYNLLRVSSSEGVTVGPVLMGVAKPVHVLTPIASVRRIVNMVALAVVEAQTQPL.

The segment at 1–428 (MDDQLKQSAL…KLTEFVYKTN (428 aa)) is malic enzyme. Tyr-39 (proton donor) is an active-site residue. An N6-acetyllysine modification is found at Lys-56. Lys-94 (proton acceptor) is an active-site residue. Positions 136, 137, and 162 each coordinate a divalent metal cation. NADP(+)-binding positions include 195–198 (AGAA), Asn-288, and Asn-320. Positions 429–759 (LFMKPIFSQA…AVVEAQTQPL (331 aa)) are phosphate acetyltransferase; required for oligomerization, inhibition by acetyl-CoA and activation by glutamate, aspartate, and glucose-6-phosphate.

The protein in the N-terminal section; belongs to the malic enzymes family. It in the C-terminal section; belongs to the phosphate acetyltransferase and butyryltransferase family. In terms of assembly, homooligomer, possibly an octamer. The cofactor is Mg(2+). Mn(2+) serves as cofactor.

It carries out the reaction (S)-malate + NADP(+) = pyruvate + CO2 + NADPH. It catalyses the reaction oxaloacetate + H(+) = pyruvate + CO2. Inhibited by 4 mM Mg(2+) and acetyl-CoA, competitively inhibited by fumarate and oxaloacetate. Activated by glutamate and aspartate, glucose-6-phosphate, acetyl-phosphate and 2 mM KCl. Catalyzes the decarboxylation of malate to pyruvate. In vitro, shows malolactic enzyme activity in the presence of NADPH. However, it is unlikely that this activity is of relevance in E.coli, which produces little NADPH. This chain is NADP-dependent malic enzyme (maeB), found in Escherichia coli (strain K12).